A 271-amino-acid polypeptide reads, in one-letter code: Putative F-box protein L165 (271 aa).

Positions 4–49 constitute an F-box domain; it reads ICELFDDVILEIMNLLSDTDKINFMFCCSRFYYFIDLVYYNDIYDY. Residues 251-271 form a disordered region; the sequence is NIPKIVPKNTHYRNSSKKYRY. Basic residues predominate over residues 260-271; that stretch reads THYRNSSKKYRY.

This is Putative F-box protein L165 from Acanthamoeba polyphaga mimivirus (APMV).